The sequence spans 366 residues: Terpene cyclase-like protein flvF (366 aa).

It belongs to the terpene synthase family. Homodimer.

The enzyme catalyses N,N-dimethyl-cadaverine + 2,6,9-trimethyl-13-oxatetracyclo[6.3.1.1(6,9).0(1,5)]tridecane carbocation = pre-flavunoidine + H(+). It participates in secondary metabolite biosynthesis; terpenoid biosynthesis. In terms of biological role, terpene cyclase-like protein; part of the gene cluster that mediates the biosynthesis of flavunoidine, an alkaloidal terpenoid with a tetracyclic cage-like core connected to dimethylcadaverine via a C-N bond and acylated with 5,5-dimethyl-L-pipecolate. The tetracyclic core is synthesized by the terpene cyclase flvE and the cytochrome P450 monooxygenase flvD. The terpene cyclase flvE catalyzes the cyclization of farnesyl pyrophosphate (FPP) to form (1R,4R,5S)-(+)-acoradiene and the cytochrome P450 monooxygenase flvD is then responsible for oxidative conversion of (1R,4R,5S)-(+)-acoradiene into the tetracyclic cage present in the final product flavunoidine. In parallel, the N-methyltransferase flvH dimethylates L-lysine to give N,N-dimethyl-L-Lysin which is decarboxylated by flvG to afford dimethylcadaverine. The terpene cyclase-like protein flvF is the enzyme that attaches the dimethylcadaverine precusor at the C-7 of the tetracyclic cage to yield pre-flavunoidine. The cytochrome monooxygenase flvC hydroxylates the C-10 position of pre-flavunoidine whereas the NRPS flvI acylates the terpenoid core at the hydroxylated C-10 with dimethylpipecolate to yield final flavunoidine. The bifunctional enzyme flvA and the dehydrogenase flvB are responsible for the synthesis of the dimethylpipecolate precursor. The PLP-dependent lyase domain of flvA might use L-O-acetyl-homoserine and alpha-keto-isovalerate to form an intermediary ketone that can cyclize intramolecularly to yield an imine. The imine can be reduced by flvB to yield the 6-carboxylated pipecolate. The C-terminal alpha-KG-dependent oxygenase domain of flvA is then proposed to catalyze the decarboxylation to yield dimethylpipecolate. The sequence is that of Terpene cyclase-like protein flvF from Aspergillus flavus (strain ATCC 200026 / FGSC A1120 / IAM 13836 / NRRL 3357 / JCM 12722 / SRRC 167).